Consider the following 71-residue polypeptide: Small ribosomal subunit protein bS21 (71 aa).

The interval 39 to 71 (EKPTQERKRKAAAAVKRQMRRTSRDVTKRKRLY) is disordered. Positions 45-71 (RKRKAAAAVKRQMRRTSRDVTKRKRLY) are enriched in basic residues.

It belongs to the bacterial ribosomal protein bS21 family.

The chain is Small ribosomal subunit protein bS21 from Xylella fastidiosa (strain M12).